An 83-amino-acid chain; its full sequence is RNA-binding protein Hfq (83 aa).

A Sm domain is found at 10-69 (DPFLNALRREHVPVSIYLVNGIKLQGQIESFDQYVVLLRNTVTQMVYKHAISTIVPGRAV).

It belongs to the Hfq family. Homohexamer.

Functionally, RNA chaperone that binds small regulatory RNA (sRNAs) and mRNAs to facilitate mRNA translational regulation in response to envelope stress, environmental stress and changes in metabolite concentrations. Also binds with high specificity to tRNAs. This is RNA-binding protein Hfq from Paracidovorax citrulli (strain AAC00-1) (Acidovorax citrulli).